A 540-amino-acid chain; its full sequence is MAKKITFNEDARRGLERGLNTLADTVKVTLGPRGRNVVLEKKWGAPVITNDGVTIAKEIELDDPYEKIGAELVKEVAKKTDDVAGDGTTTSVVLAQAMVREGLKNVAAGADPISLRRGIEKSVAAVSKALLTSAKEVETEAEIAACASISAGDPQIGDIIAQALEKVGKEGVVTVEESNTFGTELEITEGMRFDKGYLSAYFVTDAERQETVFENPYILICDSKISSVKDLLPVVDKVIQSGKQLLIIAEDVDGEALATLVVNKIRGIFKSVAVKAPGFGDRRKMMLQDIAVLTGGQVISEEVGLKLENATLDLLGRARKVVVSKDETTIVDGAGSSDQIAGRVSQIRKELENSDSDYDREKLQERLAKLSGGVAVIRSGAATEVELKERKHRIEDAVRNAKAAVEEGIVAGGGAALLQSGTSALKDLQLTSEEAVGRNIVRSAIEAPLRQISLNAGLEPGVVVGKVSSLPQGHGLDASTGEYVDMLSRGISDPVKVTRSALENAASIAGLFLTTEAVVAEKPEPKPAPGPADPGAGMDF.

Residues 29-32 (TLGP), 86-90 (DGTTT), Gly-413, and Asp-493 each bind ATP. The segment at 520 to 540 (AEKPEPKPAPGPADPGAGMDF) is disordered.

The protein belongs to the chaperonin (HSP60) family. Forms a cylinder of 14 subunits composed of two heptameric rings stacked back-to-back. Interacts with the co-chaperonin GroES.

Its subcellular location is the cytoplasm. The catalysed reaction is ATP + H2O + a folded polypeptide = ADP + phosphate + an unfolded polypeptide.. Together with its co-chaperonin GroES, plays an essential role in assisting protein folding. The GroEL-GroES system forms a nano-cage that allows encapsulation of the non-native substrate proteins and provides a physical environment optimized to promote and accelerate protein folding. The polypeptide is Chaperonin GroEL (Tropheryma whipplei (Whipple's bacillus)).